The primary structure comprises 302 residues: Sulfate adenylyltransferase subunit 2 (302 aa).

The protein belongs to the PAPS reductase family. CysD subfamily. Heterodimer composed of CysD, the smaller subunit, and CysN.

It catalyses the reaction sulfate + ATP + H(+) = adenosine 5'-phosphosulfate + diphosphate. Its pathway is sulfur metabolism; hydrogen sulfide biosynthesis; sulfite from sulfate: step 1/3. Its function is as follows. With CysN forms the ATP sulfurylase (ATPS) that catalyzes the adenylation of sulfate producing adenosine 5'-phosphosulfate (APS) and diphosphate, the first enzymatic step in sulfur assimilation pathway. APS synthesis involves the formation of a high-energy phosphoric-sulfuric acid anhydride bond driven by GTP hydrolysis by CysN coupled to ATP hydrolysis by CysD. This is Sulfate adenylyltransferase subunit 2 from Xanthomonas campestris pv. campestris (strain 8004).